The sequence spans 309 residues: Probable lipid kinase YegS-like (309 aa).

The 134-residue stretch at 1–134 folds into the DAGKc domain; it reads MAPSHWRVIL…VDLLRIDADH (134 aa). ATP-binding positions include threonine 39, 65-71, and threonine 96; that span reads GDGTLSE. The Mg(2+) site is built by leucine 219, aspartate 222, and leucine 224. The active-site Proton acceptor is glutamate 280.

This sequence belongs to the diacylglycerol/lipid kinase family. YegS lipid kinase subfamily. It depends on Mg(2+) as a cofactor. Requires Ca(2+) as cofactor.

It localises to the cytoplasm. Probably phosphorylates lipids; the in vivo substrate is unknown. This is Probable lipid kinase YegS-like from Xanthomonas euvesicatoria pv. vesicatoria (strain 85-10) (Xanthomonas campestris pv. vesicatoria).